Consider the following 257-residue polypeptide: UPF0246 protein ECA3888 (257 aa).

The protein belongs to the UPF0246 family.

This is UPF0246 protein ECA3888 from Pectobacterium atrosepticum (strain SCRI 1043 / ATCC BAA-672) (Erwinia carotovora subsp. atroseptica).